The following is a 364-amino-acid chain: Protein leg1b (364 aa).

Positions methionine 1–alanine 22 are cleaved as a signal peptide. A glycan (N-linked (GlcNAc...) asparagine) is linked at asparagine 70.

It belongs to the LEG1 family. Detected in all tissues tested, with the highest levels in serum (at protein level). At mRNA level, only expressed in liver.

Its subcellular location is the secreted. Its function is as follows. Involved in early development of liver, exocrine pancreas and intestine, probably through cell cycle regulation. In liver, its function is partially redundant with leg1a function. The chain is Protein leg1b from Danio rerio (Zebrafish).